The chain runs to 185 residues: Large ribosomal subunit protein uL5 (185 aa).

This sequence belongs to the universal ribosomal protein uL5 family. In terms of assembly, part of the 50S ribosomal subunit; part of the 5S rRNA/L5/L18/L25 subcomplex. Contacts the 5S rRNA and the P site tRNA. Forms a bridge to the 30S subunit in the 70S ribosome.

In terms of biological role, this is one of the proteins that bind and probably mediate the attachment of the 5S RNA into the large ribosomal subunit, where it forms part of the central protuberance. In the 70S ribosome it contacts protein S13 of the 30S subunit (bridge B1b), connecting the 2 subunits; this bridge is implicated in subunit movement. Contacts the P site tRNA; the 5S rRNA and some of its associated proteins might help stabilize positioning of ribosome-bound tRNAs. The chain is Large ribosomal subunit protein uL5 from Afipia carboxidovorans (strain ATCC 49405 / DSM 1227 / KCTC 32145 / OM5) (Oligotropha carboxidovorans).